Here is a 156-residue protein sequence, read N- to C-terminus: S-ribosylhomocysteine lyase (156 aa).

Residues histidine 56, histidine 60, and cysteine 123 each contribute to the Fe cation site.

It belongs to the LuxS family. Homodimer. Requires Fe cation as cofactor.

The catalysed reaction is S-(5-deoxy-D-ribos-5-yl)-L-homocysteine = (S)-4,5-dihydroxypentane-2,3-dione + L-homocysteine. Involved in the synthesis of autoinducer 2 (AI-2) which is secreted by bacteria and is used to communicate both the cell density and the metabolic potential of the environment. The regulation of gene expression in response to changes in cell density is called quorum sensing. Catalyzes the transformation of S-ribosylhomocysteine (RHC) to homocysteine (HC) and 4,5-dihydroxy-2,3-pentadione (DPD). In Staphylococcus aureus (strain bovine RF122 / ET3-1), this protein is S-ribosylhomocysteine lyase.